Here is a 193-residue protein sequence, read N- to C-terminus: Cytidylate kinase (193 aa).

Gly12 to Thr20 is a binding site for ATP.

It belongs to the cytidylate kinase family. Type 2 subfamily.

The protein resides in the cytoplasm. It carries out the reaction CMP + ATP = CDP + ADP. The enzyme catalyses dCMP + ATP = dCDP + ADP. In Thermococcus kodakarensis (strain ATCC BAA-918 / JCM 12380 / KOD1) (Pyrococcus kodakaraensis (strain KOD1)), this protein is Cytidylate kinase.